We begin with the raw amino-acid sequence, 91 residues long: C-C motif chemokine 5 (91 aa).

A signal peptide spans 1-23; the sequence is MKVSAATFAILLATATFRAPASA. Cystine bridges form between Cys33/Cys57 and Cys34/Cys73.

Belongs to the intercrine beta (chemokine CC) family.

The protein localises to the secreted. Its function is as follows. Chemoattractant for blood monocytes, memory T-helper cells and eosinophils. Causes the release of histamine from basophils and activates eosinophils. May activate several chemokine receptors including CCR1, CCR3, CCR4 and CCR5. May also be an agonist of the G protein-coupled receptor GPR75. Together with GPR75, may play a role in neuron survival through activation of a downstream signaling pathway involving the PI3, Akt and MAP kinases. By activating GPR75 may also play a role in insulin secretion by islet cells. The protein is C-C motif chemokine 5 (CCL5) of Canis lupus familiaris (Dog).